The sequence spans 358 residues: cAMP-dependent protein kinase catalytic subunit PRKX (358 aa).

Met1 carries the N-acetylmethionine modification. The interval 1-34 (MEAPGLAQAAAAESDSRKVAEETPDGAPALCPSP) is disordered. The Protein kinase domain occupies 49–303 (FDTLATVGTG…ANDVKHHRWF (255 aa)). Residues 55–63 (VGTGTFGRV) and Lys78 each bind ATP. The active-site Proton acceptor is the Asp172. The residue at position 203 (Thr203) is a Phosphothreonine. The AGC-kinase C-terminal domain maps to 304-358 (RSVDWEAVPQRKLKPPIVPKIAGDGDTSNFETYPENDWDTAAPVPQKDLEIFKNF).

This sequence belongs to the protein kinase superfamily. AGC Ser/Thr protein kinase family. cAMP subfamily. In terms of assembly, like other cAMP-dependent protein kinases, the inactive holoenzyme is probably composed of 2 PRKX catalytic subunits and a dimer of regulatory subunits. Interacts (cAMP-dependent) specifically with the regulatory subunits PRKAR1A and PRKAR1B. Compared to other cAMP-dependent serine/threonine protein kinases, does not interact with the 2 other PKA regulatory subunits PRKAR2A and PRKAR2B. Interacts with cAMP-dependent protein kinase inhibitor/PKI proteins; inhibits PRKX. Interacts with GPKOW. Interacts with SMAD6. Interacts with PKD1; involved in differentiation and controlled morphogenesis of the kidney. Interacts with PIN1 (via WW domain). Phosphorylated; autophosphorylates in vitro. In terms of tissue distribution, widely expressed (at protein level). Specifically expressed in blood by macrophages and granulocytes according to PubMed:9860982.

Its subcellular location is the cytoplasm. It is found in the nucleus. It catalyses the reaction L-seryl-[protein] + ATP = O-phospho-L-seryl-[protein] + ADP + H(+). It carries out the reaction L-threonyl-[protein] + ATP = O-phospho-L-threonyl-[protein] + ADP + H(+). Binding of cAMP to the PRKAR1A or PRKAR1B regulatory subunits induces dissociation of the holoenzyme heterotetramer. The released monomeric PRKX is then active and able to phosphorylate its substrates. Serine/threonine protein kinase regulated by and mediating cAMP signaling in cells. Acts through phosphorylation of downstream targets that may include CREB, SMAD6 and PKD1 and has multiple functions in cellular differentiation and epithelial morphogenesis. Regulates myeloid cell differentiation through SMAD6 phosphorylation. Involved in nephrogenesis by stimulating renal epithelial cell migration and tubulogenesis. Also involved in angiogenesis through stimulation of endothelial cell proliferation, migration and vascular-like structure formation. This is cAMP-dependent protein kinase catalytic subunit PRKX (PRKX) from Homo sapiens (Human).